The primary structure comprises 88 residues: Small integral membrane protein 13 (88 aa).

Residues 10–30 (LVFVATLLIVLLLMVCGWYFV) traverse the membrane as a helical segment. Polar residues predominate over residues 48-60 (TGSQEGDNEQPSG). The interval 48–88 (TGSQEGDNEQPSGSEAEEDPSASPHKMRSARQRRPPVDDGH) is disordered. Residues Ser-59, Ser-61, and Ser-70 each carry the phosphoserine modification. Basic residues predominate over residues 72–81 (HKMRSARQRR).

Belongs to the SMIM13 family.

It localises to the membrane. The chain is Small integral membrane protein 13 (Smim13) from Rattus norvegicus (Rat).